A 450-amino-acid chain; its full sequence is Phosphoglucosamine mutase (450 aa).

S102 acts as the Phosphoserine intermediate in catalysis. The Mg(2+) site is built by S102, D244, D246, and D248. Position 102 is a phosphoserine (S102).

The protein belongs to the phosphohexose mutase family. It depends on Mg(2+) as a cofactor. Post-translationally, activated by phosphorylation.

The catalysed reaction is alpha-D-glucosamine 1-phosphate = D-glucosamine 6-phosphate. In terms of biological role, catalyzes the conversion of glucosamine-6-phosphate to glucosamine-1-phosphate. The sequence is that of Phosphoglucosamine mutase from Syntrophomonas wolfei subsp. wolfei (strain DSM 2245B / Goettingen).